Consider the following 829-residue polypeptide: Conserved oligomeric Golgi complex subunit 5 (829 aa).

Ser-166 is modified (phosphoserine).

This sequence belongs to the COG5 family. As to quaternary structure, component of the conserved oligomeric Golgi complex which is composed of eight different subunits and is required for normal Golgi morphology and localization.

The protein localises to the cytoplasm. It is found in the cytosol. The protein resides in the golgi apparatus membrane. Its function is as follows. Required for normal Golgi function. This Mus musculus (Mouse) protein is Conserved oligomeric Golgi complex subunit 5 (Cog5).